Reading from the N-terminus, the 265-residue chain is Short-chain dehydrogenase/reductase GME11373 (265 aa).

Positions 26, 72, 99, and 132 each coordinate NADP(+). Catalysis depends on proton donor residues serine 148 and serine 149. The NADP(+) site is built by tyrosine 163, lysine 167, and threonine 198. The active-site Proton acceptor is tyrosine 163. Lysine 167 serves as the catalytic Lowers pKa of active site Tyr.

This sequence belongs to the short-chain dehydrogenases/reductases (SDR) family.

It participates in secondary metabolite biosynthesis. In terms of biological role, short-chain dehydrogenase/reductase; part of the gene cluster that mediates the biosynthesis of dibenzodioxocinones such as pestalotiollide B, a novel class of inhibitors against cholesterol ester transfer protein (CEPT). The biosynthesis initiates from condensation of acetate and malonate units catalyzed by the non-reducing PKS pks8/GME11356. Pks8/GME11356 lacks a thioesterase (TE) domain, which is important to the cyclizing of the third ring of atrochrysone carboxylic acid, and the esterase GME11355 might play the role of TE and catalyzes the cyclization reaction of the C ring. The lactamase-like protein GME11357 (or other beta-lactamases in Pestalotiopsis microspora) probably hydrolyzes the thioester bond between the ACP of pks8/GME11356 and the intermediate to release atrochrysone carboxylic acid, which is spontaneously dehydrates to form endocrocin anthrone. Endocrocin anthrone is further converted to emodin via the endocrocin intermediate. Emodin is then oxidized by several enzymes such as the Baeyer-Villiger oxidase GME11358, the oxidoreductase GME11367, the short chain dehydrogenase/reductase GME11373, as well as by other oxidoreductases from the cluster, to modify the A and C rings and open the B ring, and finally yield monodictyphenone. The prenyltransferase GME11375 may catalyze the addition reaction between the C5 side chains and the carbon bone of dibenzodioxocinones. The remaining biochemical reactions to the final product dibenzodioxocinones should be methylation catalyzed by methyltransferase GME11366 and reduction and lactonization reaction catalyzed by a series of oxidordeuctases. This chain is Short-chain dehydrogenase/reductase GME11373, found in Pestalotiopsis microspora.